A 208-amino-acid chain; its full sequence is NADH-ubiquinone oxidoreductase chain 4 (208 aa).

6 helical membrane passes run 23-43, 60-80, 93-113, 114-134, 147-167, and 188-208; these read VWIN…VTLW, SLSS…LLAS, KMYI…FSAN, ELIM…IIIT, LYFL…LISI, and PTWS…IKMP.

Belongs to the complex I subunit 4 family. In terms of assembly, core subunit of respiratory chain NADH dehydrogenase (Complex I) which is composed of 45 different subunits.

It is found in the mitochondrion inner membrane. It carries out the reaction a ubiquinone + NADH + 5 H(+)(in) = a ubiquinol + NAD(+) + 4 H(+)(out). Functionally, core subunit of the mitochondrial membrane respiratory chain NADH dehydrogenase (Complex I) which catalyzes electron transfer from NADH through the respiratory chain, using ubiquinone as an electron acceptor. Essential for the catalytic activity and assembly of complex I. The protein is NADH-ubiquinone oxidoreductase chain 4 (MT-ND4) of Phodopus sungorus (Striped hairy-footed hamster).